We begin with the raw amino-acid sequence, 219 residues long: Large ribosomal subunit protein uL4 (219 aa).

Positions 43–101 (AAARQGTHKTKRRGEVRGGGKKPYRQKGTGRARQGSTRAPQFAGGGVVHGPQPRDYSQR) are disordered. Over residues 61–72 (GGKKPYRQKGTG) the composition is skewed to basic residues.

Belongs to the universal ribosomal protein uL4 family. Part of the 50S ribosomal subunit.

One of the primary rRNA binding proteins, this protein initially binds near the 5'-end of the 23S rRNA. It is important during the early stages of 50S assembly. It makes multiple contacts with different domains of the 23S rRNA in the assembled 50S subunit and ribosome. Functionally, forms part of the polypeptide exit tunnel. The sequence is that of Large ribosomal subunit protein uL4 from Streptomyces coelicolor (strain ATCC BAA-471 / A3(2) / M145).